We begin with the raw amino-acid sequence, 258 residues long: MVQQLSLYSVIDEGSFDLLIATISALSGRSPVLFANYNHVAHPNPNYAIEKVNAKNQLVEQTRVQLMQEIPFEKLQTEEYSYKLCTKMTGDGPPIETEYLNSLMRSCGDGTRPWSLSLWDIPSAGKDRKVCTQAVVESVVTSTGGAHSSILSFLAELGYVPGYQFVQLGTQFYLENGIVFQISKLWALHGESGKTSAVTKDGFLIKAYLNVPKATDLESINQGTAHLQQLKRELRDYLELSIPDRKSMDSRVGHLNDF.

This sequence belongs to the Mediator complex subunit 18 family. As to quaternary structure, component of the Mediator complex.

Its subcellular location is the nucleus. Functionally, component of the Mediator complex, a coactivator involved in the regulated transcription of nearly all RNA polymerase II-dependent genes. Mediator functions as a bridge to convey information from gene-specific regulatory proteins to the basal RNA polymerase II transcription machinery. Mediator is recruited to promoters by direct interactions with regulatory proteins and serves as a scaffold for the assembly of a functional preinitiation complex with RNA polymerase II and the general transcription factors. This Eremothecium gossypii (strain ATCC 10895 / CBS 109.51 / FGSC 9923 / NRRL Y-1056) (Yeast) protein is Mediator of RNA polymerase II transcription subunit 18 (SRB5).